Here is a 641-residue protein sequence, read N- to C-terminus: Probable serine protease FE772_23065 (641 aa).

Residues 532–552 (WVELIAILAAAGWIRVMLIGL) form a helical membrane-spanning segment.

It belongs to the peptidase S1 family.

Its subcellular location is the cell inner membrane. Its function is as follows. Possibly a dedicated protease for substrate gasdermin bGSDM; cleaves the bGSDM precursor, releasing the pore-forming moiety, which integrates into the membrane and triggers cell death. Involved in defense against bacteriophages. When this probable 4 gene operon (bGSDM-FE772_23060-FE772_23065-FE772_23070) is inserted into E.coli it provides nearly 100-fold protection against phages T5 and T6 and about 8-fold against phage T4. The operon without bGSDM no longer protects against phage. This Lysobacter enzymogenes protein is Probable serine protease FE772_23065.